A 396-amino-acid chain; its full sequence is Tryptophan synthase beta chain (396 aa).

Lysine 86 bears the N6-(pyridoxal phosphate)lysine mark.

It belongs to the TrpB family. Tetramer of two alpha and two beta chains. Pyridoxal 5'-phosphate is required as a cofactor.

It carries out the reaction (1S,2R)-1-C-(indol-3-yl)glycerol 3-phosphate + L-serine = D-glyceraldehyde 3-phosphate + L-tryptophan + H2O. Its pathway is amino-acid biosynthesis; L-tryptophan biosynthesis; L-tryptophan from chorismate: step 5/5. Its function is as follows. The beta subunit is responsible for the synthesis of L-tryptophan from indole and L-serine. This chain is Tryptophan synthase beta chain, found in Proteus mirabilis (strain HI4320).